Here is a 358-residue protein sequence, read N- to C-terminus: Porphobilinogen deaminase, chloroplastic (358 aa).

Residues 1–24 (MPPPPRCAATTAHHSLLGSPTCLA) form the signal peptide. Cysteine 290 carries the S-(dipyrrolylmethanemethyl)cysteine modification.

The protein belongs to the HMBS family. The cofactor is dipyrromethane.

It is found in the plastid. It localises to the chloroplast. The catalysed reaction is 4 porphobilinogen + H2O = hydroxymethylbilane + 4 NH4(+). It participates in porphyrin-containing compound metabolism; protoporphyrin-IX biosynthesis; coproporphyrinogen-III from 5-aminolevulinate: step 2/4. It functions in the pathway porphyrin-containing compound metabolism; chlorophyll biosynthesis. Its function is as follows. Tetrapolymerization of the monopyrrole PBG into the hydroxymethylbilane pre-uroporphyrinogen in several discrete steps. This chain is Porphobilinogen deaminase, chloroplastic (HEMC), found in Oryza sativa subsp. japonica (Rice).